The following is a 286-amino-acid chain: 4-diphosphocytidyl-2-C-methyl-D-erythritol kinase (286 aa).

K11 is a catalytic residue. ATP is bound at residue 93–103 (PFGAGLGGGSS). D135 is an active-site residue.

It belongs to the GHMP kinase family. IspE subfamily.

It carries out the reaction 4-CDP-2-C-methyl-D-erythritol + ATP = 4-CDP-2-C-methyl-D-erythritol 2-phosphate + ADP + H(+). Its pathway is isoprenoid biosynthesis; isopentenyl diphosphate biosynthesis via DXP pathway; isopentenyl diphosphate from 1-deoxy-D-xylulose 5-phosphate: step 3/6. In terms of biological role, catalyzes the phosphorylation of the position 2 hydroxy group of 4-diphosphocytidyl-2C-methyl-D-erythritol. This is 4-diphosphocytidyl-2-C-methyl-D-erythritol kinase from Chlorobium phaeobacteroides (strain BS1).